The following is a 460-amino-acid chain: V-type ATP synthase beta chain (460 aa).

It belongs to the ATPase alpha/beta chains family.

Produces ATP from ADP in the presence of a proton gradient across the membrane. The V-type beta chain is a regulatory subunit. This Clostridium perfringens (strain ATCC 13124 / DSM 756 / JCM 1290 / NCIMB 6125 / NCTC 8237 / Type A) protein is V-type ATP synthase beta chain.